The chain runs to 886 residues: Chitin synthase 3 (886 aa).

Disordered regions lie at residues 1–70 (MQQG…YQTD) and 86–138 (PYEP…AGGG). The span at 7–17 (LDDRPYGRPEQ) shows a compositional bias: basic and acidic residues. Polar residues predominate over residues 37–56 (PSDQLQLNAAQSVDNLSRNS). Asn51 is a glycosylation site (N-linked (GlcNAc...) asparagine). Positions 106 to 122 (YDHDDLRPMLPHQDSHA) are enriched in basic and acidic residues. N-linked (GlcNAc...) asparagine glycosylation is present at Asn196. Transmembrane regions (helical) follow at residues 428–448 (SAFG…YVAL), 526–546 (RWLN…YQFF), 556–576 (VMLF…WFAV), 602–622 (ILGV…FVLS), 637–657 (MVYF…FIAV), 683–703 (TLIV…FLMF), and 712–732 (FVQY…YAFC). The interval 745–768 (DQAEKLPSVSTKDGSGKTDLPDES) is disordered. The next 2 helical transmembrane spans lie at 813–833 (VLAW…AAGL) and 858–878 (VVLW…MWFL).

It belongs to the chitin synthase family. Class I subfamily.

The protein localises to the cell membrane. It catalyses the reaction [(1-&gt;4)-N-acetyl-beta-D-glucosaminyl](n) + UDP-N-acetyl-alpha-D-glucosamine = [(1-&gt;4)-N-acetyl-beta-D-glucosaminyl](n+1) + UDP + H(+). Its function is as follows. Polymerizes chitin, a structural polymer of the cell wall and septum, by transferring the sugar moiety of UDP-GlcNAc to the non-reducing end of the growing chitin polymer. Involved in tolerance to hyperosmotic conditions. CHS3 is the only V.dahliae chitin synthase that is not involved in virulence. The polypeptide is Chitin synthase 3 (Verticillium dahliae (strain VdLs.17 / ATCC MYA-4575 / FGSC 10137) (Verticillium wilt)).